Reading from the N-terminus, the 303-residue chain is NAD kinase (303 aa).

Asp-71 (proton acceptor) is an active-site residue. Residues 71–72 (DG), 145–146 (ND), Arg-156, Arg-173, Asp-175, 186–191 (TGYSLS), and Gln-245 contribute to the NAD(+) site.

The protein belongs to the NAD kinase family. It depends on a divalent metal cation as a cofactor.

It is found in the cytoplasm. It carries out the reaction NAD(+) + ATP = ADP + NADP(+) + H(+). Involved in the regulation of the intracellular balance of NAD and NADP, and is a key enzyme in the biosynthesis of NADP. Catalyzes specifically the phosphorylation on 2'-hydroxyl of the adenosine moiety of NAD to yield NADP. This chain is NAD kinase, found in Magnetococcus marinus (strain ATCC BAA-1437 / JCM 17883 / MC-1).